The primary structure comprises 192 residues: Neurogenic differentiation factor 1 (192 aa).

The bHLH domain maps to 19–71 (VRRVKANGRERARMHGLNNALDMLREYIPITTQHQKLSKIETLRLARNYIDAL). Residues 116–192 (PSQFDIFSDP…SHQNTFNYSP (77 aa)) form a disordered region. Low complexity predominate over residues 139–163 (SSFSSSSPSSSCSPPQYYYSPTQPS).

Expressed in neuroblasts of the AB lineage. More specifically in precursors of the embryonic ventral cord motor neurons. Expressed to a lesser degree in the EMS lineage which generates mostly endoderm and mesoderm tissues.

The protein localises to the nucleus. Acts as a transcriptional regulator whose activity is required for several aspects of motor neuron fate specification, including cell division patterns, proper spatiotemporal expression of fate-specific markers, and normal axonal morphology and pathfinding. Involved in regulating glial specification. In Caenorhabditis elegans, this protein is Neurogenic differentiation factor 1 (cnd-1).